A 243-amino-acid polypeptide reads, in one-letter code: Zinc import ATP-binding protein ZnuC (243 aa).

One can recognise an ABC transporter domain in the interval 8–225 (LNLSNVSYYI…SEFQKLFGHH (218 aa)). 40–47 (GPNGAGKS) is a binding site for ATP.

The protein belongs to the ABC transporter superfamily. Zinc importer (TC 3.A.1.15.5) family. In terms of assembly, the complex is composed of two ATP-binding proteins (ZnuC), two transmembrane proteins (ZnuB) and a solute-binding protein (ZnuA).

The protein resides in the cell inner membrane. The enzyme catalyses Zn(2+)(out) + ATP(in) + H2O(in) = Zn(2+)(in) + ADP(in) + phosphate(in) + H(+)(in). Part of the ABC transporter complex ZnuABC involved in zinc import. Responsible for energy coupling to the transport system. In Psychrobacter cryohalolentis (strain ATCC BAA-1226 / DSM 17306 / VKM B-2378 / K5), this protein is Zinc import ATP-binding protein ZnuC.